Reading from the N-terminus, the 259-residue chain is Ribonuclease PH (259 aa).

Residues arginine 88 and glycine 126 to arginine 128 contribute to the phosphate site.

This sequence belongs to the RNase PH family. In terms of assembly, homohexameric ring arranged as a trimer of dimers.

It carries out the reaction tRNA(n+1) + phosphate = tRNA(n) + a ribonucleoside 5'-diphosphate. Its function is as follows. Phosphorolytic 3'-5' exoribonuclease that plays an important role in tRNA 3'-end maturation. Removes nucleotide residues following the 3'-CCA terminus of tRNAs; can also add nucleotides to the ends of RNA molecules by using nucleoside diphosphates as substrates, but this may not be physiologically important. Probably plays a role in initiation of 16S rRNA degradation (leading to ribosome degradation) during starvation. This chain is Ribonuclease PH, found in Mycobacterium bovis (strain ATCC BAA-935 / AF2122/97).